A 348-amino-acid polypeptide reads, in one-letter code: NADH-ubiquinone oxidoreductase chain 2 (348 aa).

9 consecutive transmembrane segments (helical) span residues 13–33 (VGLG…WMGL), 60–80 (FLTQ…NAWM), 93–113 (IAST…PMHF), 149–169 (IDPL…GWGG), 178–197 (ILAY…IQYA), 202–219 (LIAL…FLTL), 246–266 (LVLL…KWLI), 274–294 (DLPI…YFYL), and 326–346 (LALF…ILML).

Belongs to the complex I subunit 2 family.

The protein resides in the mitochondrion inner membrane. The enzyme catalyses a ubiquinone + NADH + 5 H(+)(in) = a ubiquinol + NAD(+) + 4 H(+)(out). Core subunit of the mitochondrial membrane respiratory chain NADH dehydrogenase (Complex I) that is believed to belong to the minimal assembly required for catalysis. Complex I functions in the transfer of electrons from NADH to the respiratory chain. The immediate electron acceptor for the enzyme is believed to be ubiquinone. In Cyprinus carpio (Common carp), this protein is NADH-ubiquinone oxidoreductase chain 2 (MT-ND2).